The primary structure comprises 163 residues: NADH-quinone oxidoreductase subunit I (163 aa).

4Fe-4S ferredoxin-type domains lie at 54 to 84 and 94 to 123; these read LRRY…IESD and TRYD…ETPI. C64, C67, C70, C74, C103, C106, C109, and C113 together coordinate [4Fe-4S] cluster.

This sequence belongs to the complex I 23 kDa subunit family. As to quaternary structure, NDH-1 is composed of 14 different subunits. Subunits NuoA, H, J, K, L, M, N constitute the membrane sector of the complex. It depends on [4Fe-4S] cluster as a cofactor.

It is found in the cell inner membrane. The enzyme catalyses a quinone + NADH + 5 H(+)(in) = a quinol + NAD(+) + 4 H(+)(out). In terms of biological role, NDH-1 shuttles electrons from NADH, via FMN and iron-sulfur (Fe-S) centers, to quinones in the respiratory chain. The immediate electron acceptor for the enzyme in this species is believed to be ubiquinone. Couples the redox reaction to proton translocation (for every two electrons transferred, four hydrogen ions are translocated across the cytoplasmic membrane), and thus conserves the redox energy in a proton gradient. This is NADH-quinone oxidoreductase subunit I from Cupriavidus pinatubonensis (strain JMP 134 / LMG 1197) (Cupriavidus necator (strain JMP 134)).